The chain runs to 1083 residues: Ubiquitin-protein ligase E3C (1083 aa).

2 stretches are compositionally biased toward basic and acidic residues: residues 1-10 and 20-40; these read MFSFEGDFKT and SRKE…RKRE. A disordered region spans residues 1–40; it reads MFSFEGDFKTRPKVSLGGASRKEEKASLLHRTQEERRKRE. A cis-determinant of acceptor ubiquitin-binding region spans residues 1–60; that stretch reads MFSFEGDFKTRPKVSLGGASRKEEKASLLHRTQEERRKREEERRRLKNAIIIQSFIRGYR. Residues 45–74 enclose the IQ domain; it reads RLKNAIIIQSFIRGYRDRKQQYSIQRSAFD. The disordered stretch occupies residues 355–385; that stretch reads SPASASCHDSASDSEEESEEADKPSSPEDGR. Basic and acidic residues predominate over residues 375-385; that stretch reads ADKPSSPEDGR. The region spanning 744 to 1083 is the HECT domain; it reads NEPDLKKRIR…IECAAGFELS (340 aa). K903 is covalently cross-linked (Glycyl lysine isopeptide (Lys-Gly) (interchain with G-Cter in ubiquitin); by autocatalysis). The active-site Glycyl thioester intermediate is the C1051.

It belongs to the UBE3C family. Interacts with 26S proteasomes. Interacts (via the HECT domain) with UBE2D1 and, less efficiently, with UBE2L3. In terms of processing, autoubiquitinated; promoting its own degradation. In terms of tissue distribution, highly expressed in skeletal muscle. Detected at much lower levels in kidney and pancreas.

It catalyses the reaction S-ubiquitinyl-[E2 ubiquitin-conjugating enzyme]-L-cysteine + [acceptor protein]-L-lysine = [E2 ubiquitin-conjugating enzyme]-L-cysteine + N(6)-ubiquitinyl-[acceptor protein]-L-lysine.. Its pathway is protein modification; protein ubiquitination. In terms of biological role, E3 ubiquitin-protein ligase that specifically catalyzes 'Lys-29'- and 'Lys-48'-linked polyubiquitin chains. Accepts ubiquitin from the E2 ubiquitin-conjugating enzyme UBE2D1 in the form of a thioester and then directly transfers the ubiquitin to targeted substrates. Associates with the proteasome and promotes elongation of ubiquitin chains on substrates bound to the 26S proteasome. Also catalyzes 'Lys-29'- and 'Lys-48'-linked ubiquitination of 26S proteasome subunit ADRM1/RPN13 in response to proteotoxic stress, impairing the ability of the proteasome to bind and degrade ubiquitin-conjugated proteins. Acts as a negative regulator of autophagy by mediating 'Lys-29'- and 'Lys-48'-linked ubiquitination of PIK3C3/VPS34, promoting its degradation. Can assemble unanchored poly-ubiquitin chains in either 'Lys-29'- or 'Lys-48'-linked polyubiquitin chains; with some preference for 'Lys-48' linkages. Acts as a negative regulator of type I interferon by mediating 'Lys-48'-linked ubiquitination of IRF3 and IRF7, leading to their degradation by the proteasome. Catalyzes ubiquitination and degradation of CAND2. In Homo sapiens (Human), this protein is Ubiquitin-protein ligase E3C.